The following is a 420-amino-acid chain: O-methyltransferase penK (420 aa).

Asp285 lines the S-adenosyl-L-methionine pocket. Catalysis depends on His325, which acts as the Proton acceptor.

Belongs to the class I-like SAM-binding methyltransferase superfamily. Cation-independent O-methyltransferase family.

Its pathway is secondary metabolite biosynthesis. It participates in alkaloid biosynthesis. The protein operates within mycotoxin biosynthesis. Functionally, O-methyltransferase; part of the gene cluster that mediates the biosynthesis of penigequinolones, potent insecticidal alkaloids that contain a highly modified 10-carbon prenyl group. The first stage is catalyzed by the nonribosomal peptide synthetase penN that condenses anthranilic acid and O-methyl-L-tyrosine to produce 4'-methoxycyclopeptin. 4'-methoxycyclopeptin is then converted to 4'-methoxydehydrocyclopeptin by the ketoglutarate-dependent dioxygenase penM through dehydrogenation to form a double bond between C-alpha and C-beta of the O-methyltyrosine side chain. PenM also converts its first product methoxydehydrocyclopeptin to 4'-methoxycyclopenin. The following conversion of 4'methoxycyclopenin into 4'-methoxyviridicatin is catalyzed by the cyclopenase penL. 4'-methoxyviridicatin is the precursor of quinolone natural products, and is further converted to quinolinone B. The prenyltransferase penI then catalyzes the canonical Friedel-Crafts alkylation of quinolinone B with dimethylallyl cation to yield dimethylallyl quinolone, which is subjected to FAD-dependent dehydrogenation by the FAD-linked oxidoreductase penH to yield conjugated aryl diene. The delta(3') double bond then serves as the site of the second alkylation with DMAPP catalyzed by the prenyltransferase penG to yield a carbenium ion intermediate, which can be attacked by H(2)O to yield a styrenyl quinolone containing a C3'-hydroxyprenyl chain, or undergo cyclization to yield yaequinolones J1 and J2. The conversion of the styrenyl quinolone into the tetrahydrofuran-containing yaequinolone C is performed by the FAD-dependent monooxygenase penE and involves epoxidation of the terminal C7'-C8' olefin, followed by epoxide ring opening initiated by the C3' hydroxyl group. The predicted cysteine hydrolase penJ acts as an epoxide hydrolase that enhances the rate of the 5-exo-tet cyclization step, increasing the yield of yaequinolone C. PenF catalyzes the cationic rearrangement of the epoxide formed by penE (before ring opening to produce yaequinolone C) into yaequinolone D. Finally, the short-chain dehydrogenase/reductase (SDR)-like reductase penD, catalyzes both the dehydration of yaequinolone D and the reduction of the resulting oxonium to yield penigequinolone. This chain is O-methyltransferase penK, found in Penicillium thymicola.